The sequence spans 1723 residues: Probable outer membrane protein pmp20 (1723 aa).

The N-terminal stretch at 1–21 is a signal peptide; it reads MKWLPATAVFAAVLPALTAFG. Disordered regions lie at residues 78–100 and 139–161; these read VTPD…SGAT and LSSS…SASA. Low complexity-rich tracts occupy residues 85 to 100 and 140 to 161; these read SSSN…SGAT and SSSS…SASA. The Autotransporter domain maps to 1434-1723; that stretch reads EDPAFNNFWA…MANGGIRFVF (290 aa).

Belongs to the PMP outer membrane protein family.

Its subcellular location is the secreted. It is found in the cell wall. It localises to the cell outer membrane. The chain is Probable outer membrane protein pmp20 (pmp20) from Chlamydia pneumoniae (Chlamydophila pneumoniae).